A 476-amino-acid polypeptide reads, in one-letter code: tRNA-2-methylthio-N(6)-dimethylallyladenosine synthase (476 aa).

Basic and acidic residues predominate over residues 1–14 (MTEVVHLHMPEEAR). Residues 1–20 (MTEVVHLHMPEEARATQSRD) form a disordered region. An MTTase N-terminal domain is found at 26 to 147 (RRYYVWTVGC…APNPIYQLEE (122 aa)). Residues Cys35, Cys71, Cys105, Cys170, Cys174, and Cys177 each contribute to the [4Fe-4S] cluster site. A Radical SAM core domain is found at 156 to 390 (DHPPVSVHVP…ERLQEQIAAE (235 aa)). One can recognise a TRAM domain in the interval 393 to 453 (ARFLHQTVEV…PWSLQGVLAR (61 aa)).

It belongs to the methylthiotransferase family. MiaB subfamily. As to quaternary structure, monomer. Requires [4Fe-4S] cluster as cofactor.

The protein resides in the cytoplasm. The enzyme catalyses N(6)-dimethylallyladenosine(37) in tRNA + (sulfur carrier)-SH + AH2 + 2 S-adenosyl-L-methionine = 2-methylsulfanyl-N(6)-dimethylallyladenosine(37) in tRNA + (sulfur carrier)-H + 5'-deoxyadenosine + L-methionine + A + S-adenosyl-L-homocysteine + 2 H(+). In terms of biological role, catalyzes the methylthiolation of N6-(dimethylallyl)adenosine (i(6)A), leading to the formation of 2-methylthio-N6-(dimethylallyl)adenosine (ms(2)i(6)A) at position 37 in tRNAs that read codons beginning with uridine. The chain is tRNA-2-methylthio-N(6)-dimethylallyladenosine synthase from Roseiflexus sp. (strain RS-1).